Here is a 294-residue protein sequence, read N- to C-terminus: Diaminopimelate epimerase (294 aa).

Residues N15, Q47, and N67 each contribute to the substrate site. The Proton donor role is filled by C76. Residues 77-78 (GN), N163, N197, and 215-216 (ER) contribute to the substrate site. The active-site Proton acceptor is the C224. 225-226 (GS) is a binding site for substrate.

The protein belongs to the diaminopimelate epimerase family. As to quaternary structure, homodimer.

The protein resides in the cytoplasm. The catalysed reaction is (2S,6S)-2,6-diaminopimelate = meso-2,6-diaminopimelate. Its pathway is amino-acid biosynthesis; L-lysine biosynthesis via DAP pathway; DL-2,6-diaminopimelate from LL-2,6-diaminopimelate: step 1/1. Its function is as follows. Catalyzes the stereoinversion of LL-2,6-diaminopimelate (L,L-DAP) to meso-diaminopimelate (meso-DAP), a precursor of L-lysine and an essential component of the bacterial peptidoglycan. The polypeptide is Diaminopimelate epimerase (Mesorhizobium japonicum (strain LMG 29417 / CECT 9101 / MAFF 303099) (Mesorhizobium loti (strain MAFF 303099))).